The following is a 136-amino-acid chain: Type II nicking enzyme V.XorIIP (136 aa).

Belongs to the Vsr family.

In terms of biological role, may nick XorII sequences that contain T/G mispairs resulting from m5C-deamination. If unrepaired, these mismatches can lead to C-to-T transition mutations. The very short patch (VSP) repair process counteracts the mutagenic process by repairing the mismatches in favor of the G-containing strand. This enzyme is an endonuclease that nicks double-stranded DNA within the sequence CGATCG (C-methylation site unknown) next to the thymidine residue that is mismatched to 2'-deoxyguanosine. The incision is mismatch-dependent and strand-specific. This chain is Type II nicking enzyme V.XorIIP, found in Xanthomonas oryzae pv. oryzae (strain KACC10331 / KXO85).